Here is a 240-residue protein sequence, read N- to C-terminus: Peptidyl-tRNA hydrolase (240 aa).

Tyr14 provides a ligand contact to tRNA. His19 acts as the Proton acceptor in catalysis. TRNA-binding residues include Tyr64, Asn66, and Asn112. The span at 190 to 204 (KADEEKPRKDSEKKP) shows a compositional bias: basic and acidic residues. The tract at residues 190-240 (KADEEKPRKDSEKKPAGQSHIRQARNNNQPKLPATGPMADMLKKMFGNKGE) is disordered. Residues 209 to 219 (HIRQARNNNQP) show a composition bias toward polar residues.

It belongs to the PTH family. As to quaternary structure, monomer.

It localises to the cytoplasm. The enzyme catalyses an N-acyl-L-alpha-aminoacyl-tRNA + H2O = an N-acyl-L-amino acid + a tRNA + H(+). Hydrolyzes ribosome-free peptidyl-tRNAs (with 1 or more amino acids incorporated), which drop off the ribosome during protein synthesis, or as a result of ribosome stalling. Its function is as follows. Catalyzes the release of premature peptidyl moieties from peptidyl-tRNA molecules trapped in stalled 50S ribosomal subunits, and thus maintains levels of free tRNAs and 50S ribosomes. This chain is Peptidyl-tRNA hydrolase, found in Rhizobium etli (strain ATCC 51251 / DSM 11541 / JCM 21823 / NBRC 15573 / CFN 42).